The chain runs to 178 residues: Cytochrome b6-f complex iron-sulfur subunit 3 (178 aa).

A helical membrane pass occupies residues 20–42; that stretch reads FITGATVAVTAGAALYPAGKFLI. The region spanning 65-161 is the Rieske domain; it reads PASQILAEPP…VAVIDNSILI (97 aa). Positions 107, 109, 125, and 128 each coordinate [2Fe-2S] cluster. An intrachain disulfide couples Cys112 to Cys127.

It belongs to the Rieske iron-sulfur protein family. The 4 large subunits of the cytochrome b6-f complex are cytochrome b6, subunit IV (17 kDa polypeptide, PetD), cytochrome f and the Rieske protein, while the 4 small subunits are PetG, PetL, PetM and PetN. The complex functions as a dimer. [2Fe-2S] cluster serves as cofactor.

It is found in the cellular thylakoid membrane. It catalyses the reaction 2 oxidized [plastocyanin] + a plastoquinol + 2 H(+)(in) = 2 reduced [plastocyanin] + a plastoquinone + 4 H(+)(out). Functionally, component of the cytochrome b6-f complex, which mediates electron transfer between photosystem II (PSII) and photosystem I (PSI), cyclic electron flow around PSI, and state transitions. The polypeptide is Cytochrome b6-f complex iron-sulfur subunit 3 (Nostoc sp. (strain PCC 7120 / SAG 25.82 / UTEX 2576)).